Consider the following 551-residue polypeptide: Glucose-6-phosphate isomerase (551 aa).

The active-site Proton donor is the Glu-356. Catalysis depends on residues His-387 and Lys-515.

This sequence belongs to the GPI family.

The protein localises to the cytoplasm. The catalysed reaction is alpha-D-glucose 6-phosphate = beta-D-fructose 6-phosphate. Its pathway is carbohydrate biosynthesis; gluconeogenesis. The protein operates within carbohydrate degradation; glycolysis; D-glyceraldehyde 3-phosphate and glycerone phosphate from D-glucose: step 2/4. Catalyzes the reversible isomerization of glucose-6-phosphate to fructose-6-phosphate. The chain is Glucose-6-phosphate isomerase from Blochmanniella pennsylvanica (strain BPEN).